Consider the following 68-residue polypeptide: Small ribosomal subunit protein bS21 (68 aa).

It belongs to the bacterial ribosomal protein bS21 family.

The sequence is that of Small ribosomal subunit protein bS21 from Ruegeria pomeroyi (strain ATCC 700808 / DSM 15171 / DSS-3) (Silicibacter pomeroyi).